Here is a 282-residue protein sequence, read N- to C-terminus: Glycine betaine/carnitine transport permease protein GbuB (282 aa).

6 consecutive transmembrane segments (helical) span residues 44-64, 70-90, 99-119, 140-160, 220-240, and 251-271; these read VFDLVPPWLFIILLVFGTFWV, KWGLIIFEVVGLLLIWNLDFW, LVLTSSLIALVIGVPLGIWMA, AFVYLIPAVAFFGIGMVPGVV, IMLALSMVVIASMIGAMGLGT, and AGGGFVAGIAIVIVAIILDRL. Residues 93–272 enclose the ABC transmembrane type-1 domain; sequence MTQTLTLVLT…IVAIILDRLT (180 aa).

Belongs to the binding-protein-dependent transport system permease family. In terms of assembly, the complex is composed of two ATP-binding proteins (GbuA), two transmembrane proteins (GbuB) and a solute-binding protein (GbuC).

The protein localises to the cell membrane. The complex is activated by an osmotic gradient or by low temperature. Its function is as follows. Part of the ABC transporter complex GbuABC involved in glycine betaine uptake. Responsible for the translocation of the substrate across the membrane. Involved, with BetL and OpuC, in osmoprotection and cryoprotection of Listeria. Can also uptake carnitine when carnitine is abundant in the growth medium. The protein is Glycine betaine/carnitine transport permease protein GbuB (gbuB) of Listeria monocytogenes serotype 1/2a (strain 10403S).